Consider the following 602-residue polypeptide: ATP-dependent lipid A-core flippase (602 aa).

Helical transmembrane passes span 28-48 (VGIF…QPML), 84-104 (LLII…NYFL), 158-178 (IKVV…LLWM), 180-200 (WHLT…VSIA), and 268-288 (PMLQ…VLFL). Positions 32–323 (LLSIVGFVIF…LSEVSSTIQK (292 aa)) constitute an ABC transmembrane type-1 domain. The 237-residue stretch at 355 to 591 (LEVRNLSFTY…NGHYARLHAM (237 aa)) folds into the ABC transporter domain. 389-396 (GRSGSGKS) provides a ligand contact to ATP.

It belongs to the ABC transporter superfamily. Lipid exporter (TC 3.A.1.106) family. In terms of assembly, homodimer.

It is found in the cell inner membrane. It carries out the reaction ATP + H2O + lipid A-core oligosaccharideSide 1 = ADP + phosphate + lipid A-core oligosaccharideSide 2.. Functionally, involved in lipopolysaccharide (LPS) biosynthesis. Translocates lipid A-core from the inner to the outer leaflet of the inner membrane. Transmembrane domains (TMD) form a pore in the inner membrane and the ATP-binding domain (NBD) is responsible for energy generation. In Pseudomonas putida (strain ATCC 47054 / DSM 6125 / CFBP 8728 / NCIMB 11950 / KT2440), this protein is ATP-dependent lipid A-core flippase.